The sequence spans 301 residues: Mitochondrial carnitine/acylcarnitine carrier protein (301 aa).

N-acetylalanine is present on Ala2. The Cytoplasmic segment spans residues 2-12 (ADEPKPISPFK). Solcar repeat units lie at residues 8–99 (ISPF…GKKL), 108–196 (LSYP…LKNL), and 207–293 (LSVP…AMKF). Residues 13–31 (NLLAGGFGGMCLVFVGHPL) traverse the membrane as a helical segment. Topologically, residues 32 to 73 (DTVKVRLQTQPPSLSGQPPMYSGTLDCFRKTLMREGITGLYR) are mitochondrial matrix. The helical transmembrane segment at 74-93 (GMAAPIIGVTPMFAVCFFGF) threads the bilayer. The Cytoplasmic segment spans residues 94 to 112 (GLGKKLQQKSPEDELSYPQ). Residues 113–131 (LFTAGMLSGVFTTGIMTPG) form a helical membrane-spanning segment. Residues 132–170 (ERIKCLLQIQASSGENKYSGTLDCAKKLYQEFGIRGFYK) are Mitochondrial matrix-facing. Lys148 and Lys157 each carry N6-acetyllysine. At Lys170 the chain carries N6-acetyllysine; alternate. Lys170 carries the post-translational modification N6-succinyllysine; alternate. A helical transmembrane segment spans residues 171–190 (GTVLTLMRDVPASGMYFMTY). Over 191-211 (EWLKNLFTPEGKSVSDLSVPR) the chain is Cytoplasmic. Residues 212–230 (ILVAGGFAGIFNWAVAIPP) form a helical membrane-spanning segment. Residues 231–267 (DVLKSRFQTAPPGKYPNGFRDVLRELIREEGVTSLYK) are Mitochondrial matrix-facing. The chain crosses the membrane as a helical span at residues 268 to 287 (GFNAVMIRAFPANAACFLGF). The Cytoplasmic portion of the chain corresponds to 288 to 301 (EIAMKFLNWIAPNL).

It belongs to the mitochondrial carrier (TC 2.A.29) family. As to expression, widely expressed, with highest levels in the liver, intermediate levels in heart, testis and kidney and low levels in brain, including cortex, cerebellum, hippocampus and hypothalamus.

The protein localises to the mitochondrion inner membrane. It carries out the reaction O-acetyl-(R)-carnitine(in) + (R)-carnitine(out) = O-acetyl-(R)-carnitine(out) + (R)-carnitine(in). It catalyses the reaction an O-acyl-(R)-carnitine(in) + (R)-carnitine(out) = an O-acyl-(R)-carnitine(out) + (R)-carnitine(in). The enzyme catalyses O-propanoyl-(R)-carnitine(in) + (R)-carnitine(out) = O-propanoyl-(R)-carnitine(out) + (R)-carnitine(in). The catalysed reaction is O-hexadecanoyl-(R)-carnitine(in) + (R)-carnitine(out) = O-hexadecanoyl-(R)-carnitine(out) + (R)-carnitine(in). It carries out the reaction O-octanoyl-(R)-carnitine(in) + (R)-carnitine(out) = O-octanoyl-(R)-carnitine(out) + (R)-carnitine(in). It catalyses the reaction (R)-carnitine(in) = (R)-carnitine(out). In terms of biological role, mediates the electroneutral exchange of acylcarnitines (O-acyl-(R)-carnitine or L-acylcarnitine) of different acyl chain lengths (ranging from O-acetyl-(R)-carnitine to long-chain O-acyl-(R)-carnitines) with free carnitine ((R)-carnitine or L-carnitine) across the mitochondrial inner membrane, via a ping-pong mechanism. Key player in the mitochondrial oxidation pathway, it translocates the fatty acids in the form of acylcarnitines into the mitochondrial matrix, where the carnitine palmitoyltransferase 2 (CPT-2) activates them to undergo fatty acid beta-oxidation. Catalyzes the unidirectional transport (uniport) of carnitine at lower rates than the antiport (exchange). The protein is Mitochondrial carnitine/acylcarnitine carrier protein of Mus musculus (Mouse).